A 374-amino-acid polypeptide reads, in one-letter code: Fanconi anemia group F protein (374 aa).

In terms of assembly, belongs to the multisubunit FA complex composed of FANCA, FANCB, FANCC, FANCE, FANCF, FANCG, FANCL/PHF9 and FANCM. The complex is not found in FA patients. In complex with FANCA, FANCG and FANCL, but not with FANCC, nor FANCE, interacts with HES1; this interaction may be essential for the stability and nuclear localization of FA core complex proteins.

The protein localises to the nucleus. DNA repair protein that may operate in a postreplication repair or a cell cycle checkpoint function. May be implicated in interstrand DNA cross-link repair and in the maintenance of normal chromosome stability. This chain is Fanconi anemia group F protein (FANCF), found in Homo sapiens (Human).